A 267-amino-acid polypeptide reads, in one-letter code: Probable proteasome subunit beta type-2 (267 aa).

A propeptide spans 1 to 35 (MMGINERKGFDFEYYQRNLLLQEKGFPTPKATSTG) (removed in mature form). The Nucleophile role is filled by Thr36.

It belongs to the peptidase T1B family. The 26S proteasome consists of a 20S proteasome core and two 19S regulatory subunits. The 20S proteasome core is composed of 28 subunits that are arranged in four stacked rings, resulting in a barrel-shaped structure. The two end rings are each formed by seven alpha subunits, and the two central rings are each formed by seven beta subunits. The catalytic chamber with the active sites is on the inside of the barrel.

It is found in the cytoplasm. The protein resides in the nucleus. It catalyses the reaction Cleavage of peptide bonds with very broad specificity.. The proteasome is a multicatalytic proteinase complex which is characterized by its ability to cleave peptides with Arg, Phe, Tyr, Leu, and Glu adjacent to the leaving group at neutral or slightly basic pH. The proteasome has an ATP-dependent proteolytic activity (Potential). The polypeptide is Probable proteasome subunit beta type-2 (pup1) (Schizosaccharomyces pombe (strain 972 / ATCC 24843) (Fission yeast)).